Here is a 282-residue protein sequence, read N- to C-terminus: NAD(P)H-hydrate epimerase (282 aa).

Residues 1–53 (MSGLRTLLGLGLLVAGSRLPRIASRQSVCRAGPIWWGTQHRSSETMASAAVKY) constitute a mitochondrion transit peptide. The 211-residue stretch at 59–269 (AQAVDEELFN…ALEKKYQLNL (211 aa)) folds into the YjeF N-terminal domain. Residue 113 to 117 (NNGGD) participates in (6S)-NADPHX binding. N114 is a K(+) binding site. An N6-succinyllysine modification is found at K138. D179 is a binding site for K(+). Residues 183 to 189 (GFSFKGD) and D212 contribute to the (6S)-NADPHX site. A K(+)-binding site is contributed by S215.

This sequence belongs to the NnrE/AIBP family. As to quaternary structure, homodimer. Interacts with APOA1 and APOA2. Requires K(+) as cofactor. Undergoes physiological phosphorylation during sperm capacitation, downstream to PKA activation.

The protein resides in the mitochondrion. Its subcellular location is the secreted. The enzyme catalyses (6R)-NADHX = (6S)-NADHX. It catalyses the reaction (6R)-NADPHX = (6S)-NADPHX. In terms of biological role, catalyzes the epimerization of the S- and R-forms of NAD(P)HX, a damaged form of NAD(P)H that is a result of enzymatic or heat-dependent hydration. This is a prerequisite for the S-specific NAD(P)H-hydrate dehydratase to allow the repair of both epimers of NAD(P)HX. Accelerates cholesterol efflux from endothelial cells to high-density lipoprotein (HDL) and thereby regulates angiogenesis. This chain is NAD(P)H-hydrate epimerase, found in Rattus norvegicus (Rat).